The chain runs to 624 residues: Chaperone protein HtpG (624 aa).

The segment at 1 to 336 (MKGQETRGFQ…SNDLPLNVSR (336 aa)) is a; substrate-binding. A b region spans residues 337 to 552 (EILQDSTVTR…ADEMSTQMAK (216 aa)). Residues 553–624 (LFAAAGQSVP…IRRMNQLLVS (72 aa)) are c.

It belongs to the heat shock protein 90 family. As to quaternary structure, homodimer. Post-translationally, UMPylated on a histidine residue by YdiU under ATP-limited conditions.

The protein localises to the cytoplasm. Its activity is regulated as follows. UMPylation of the chaperone by YdiU negatively regulates its activity, facilitating Salmonella survival under ATP-limited conditions. Molecular chaperone. Has ATPase activity. The sequence is that of Chaperone protein HtpG from Salmonella typhimurium (strain LT2 / SGSC1412 / ATCC 700720).